A 329-amino-acid chain; its full sequence is Mas-related G-protein coupled receptor member X2 (329 aa).

Residues 1-33 (MDPTTPAWGTESTTMNGNDQALPLFCGKETLIS) are Extracellular-facing. The chain crosses the membrane as a helical span at residues 34 to 54 (VFLILFIALVGLVGNGFVLWL). Residues 55–63 (LGFRMRKNA) are Cytoplasmic-facing. The helical transmembrane segment at 64–84 (FSVYVLSLAGADFLFLCFQII) threads the bilayer. Residues 85–96 (NCLVYLSNVFCS) are Extracellular-facing. The helical transmembrane segment at 97–117 (ISINFPSFFITVMTCAYLAGL) threads the bilayer. The Cytoplasmic segment spans residues 118–144 (SMLSTISTERCLSVLWPIWYRCRRPRH). A helical membrane pass occupies residues 145-165 (LSAVACVLLWALSLLLSILEG). The Extracellular portion of the chain corresponds to 166–183 (KFCGLFGDGDSGWCQTFD). The helical transmembrane segment at 184 to 204 (LITAAWLIFLFMVLCGSSLAL) threads the bilayer. Topologically, residues 205–227 (LVRILCGSRGLPLTRLYLTILLT) are cytoplasmic. Residues 228–248 (VLVFLLCGLPFGIQWFLILWI) form a helical membrane-spanning segment. The Extracellular portion of the chain corresponds to 249 to 263 (WKNSDVLFCHIHPVS). The chain crosses the membrane as a helical span at residues 264 to 284 (VVLSSLNSSANPIIYFFVGSF). Residues 285–329 (RKQWRLQQPILKLALQRALQDIAEVDHSEGCFRQGTPEMSRSSLV) are Cytoplasmic-facing.

Belongs to the G-protein coupled receptor 1 family. Mas subfamily.

Its subcellular location is the cell membrane. Its function is as follows. Mast cell-specific receptor for basic secretagogues, i.e. cationic amphiphilic drugs, as well as endo- or exogenous peptides, consisting of a basic head group and a hydrophobic core. Recognizes and binds small molecules containing a cyclized tetrahydroisoquinoline (THIQ), such as non-steroidal neuromuscular blocking drugs (NMBDs), including tubocurarine and atracurium. In response to these compounds, mediates pseudo-allergic reactions characterized by histamine release, inflammation and airway contraction. The protein is Mas-related G-protein coupled receptor member X2 (MRGPRX2) of Pan troglodytes (Chimpanzee).